The following is a 320-amino-acid chain: G-protein coupled receptor homolog FPV021 (320 aa).

At 1 to 18 (MDTDYGTVHTQQSVKGNT) the chain is on the extracellular side. Residues 19 to 39 (LILLIYFISFIVGFPGNCTVI) traverse the membrane as a helical segment. The Cytoplasmic segment spans residues 40 to 52 (WFTGYRWKKSVTT). The chain crosses the membrane as a helical span at residues 53–73 (IWFLNLAIADTLFVIFIPFEI). At 74–91 (TYILMGHYWPFGLFVCRI) the chain is on the extracellular side. Cysteines 89 and 167 form a disulfide. A helical membrane pass occupies residues 92-112 (GSLMFNTGMYASIFFLTFISI). Over 113–133 (DRYCLAFRRDICNKYRYRINI) the chain is Cytoplasmic. Residues 134–154 (MVMIIISWIISILLSTPYMYF) form a helical membrane-spanning segment. The Extracellular portion of the chain corresponds to 155–188 (KNTNEKYRNNRDCLEDYHSDNNTYLLRRVVFCIS). Asn-175 carries an N-linked (GlcNAc...) asparagine; by host glycan. Residues 189 to 209 (LVMRYLVPSVVMLFCYCLLLF) form a helical membrane-spanning segment. Residues 210–222 (KHSLFLSKGQTYT) are Cytoplasmic-facing. A helical transmembrane segment spans residues 223–243 (IVIMITSFMVLWTPYNILYFI). Topologically, residues 244–260 (DVIGSHYYNADTIIDAA) are extracellular. The chain crosses the membrane as a helical span at residues 261-281 (PISISLIFLSSSINPMIYMLV). At 282 to 320 (GRYVSFENYSMRESLKLILSEERDNQTNHENEIKMENIN) the chain is on the cytoplasmic side.

Belongs to the G-protein coupled receptor 1 family.

The protein localises to the host cell membrane. This chain is G-protein coupled receptor homolog FPV021, found in Vertebrata (FPV).